A 183-amino-acid polypeptide reads, in one-letter code: MSHLVIYNEEGSVLELIKEYEAVSKRLAALGVRFERWKADNELSWDAGQKEVIKAYEEDINRIIKEFGFKSLDVVSLIPENPKKDELRNVFLKEHTHSDFEVRFFVDGSGTFYLHIDDKVYVAFCEKGDFISVPAYTKHWFDMGSKPFFKAIRFFLIPEGWVADFTGSDISLKIPSHDDIASL.

Fe(2+)-binding residues include His95, His97, Glu101, and His139. His95, His97, Glu101, and His139 together coordinate Ni(2+).

The protein belongs to the acireductone dioxygenase (ARD) family. In terms of assembly, monomer. Fe(2+) serves as cofactor. The cofactor is Ni(2+).

The enzyme catalyses 1,2-dihydroxy-5-(methylsulfanyl)pent-1-en-3-one + O2 = 3-(methylsulfanyl)propanoate + CO + formate + 2 H(+). The catalysed reaction is 1,2-dihydroxy-5-(methylsulfanyl)pent-1-en-3-one + O2 = 4-methylsulfanyl-2-oxobutanoate + formate + 2 H(+). Its pathway is amino-acid biosynthesis; L-methionine biosynthesis via salvage pathway; L-methionine from S-methyl-5-thio-alpha-D-ribose 1-phosphate: step 5/6. Functionally, catalyzes 2 different reactions between oxygen and the acireductone 1,2-dihydroxy-3-keto-5-methylthiopentene (DHK-MTPene) depending upon the metal bound in the active site. Fe-containing acireductone dioxygenase (Fe-ARD) produces formate and 2-keto-4-methylthiobutyrate (KMTB), the alpha-ketoacid precursor of methionine in the methionine recycle pathway. Ni-containing acireductone dioxygenase (Ni-ARD) produces methylthiopropionate, carbon monoxide and formate, and does not lie on the methionine recycle pathway. The chain is Acireductone dioxygenase from Hydrogenobaculum sp. (strain Y04AAS1).